Reading from the N-terminus, the 100-residue chain is Large ribosomal subunit protein uL23 (100 aa).

It belongs to the universal ribosomal protein uL23 family. Part of the 50S ribosomal subunit. Contacts protein L29, and trigger factor when it is bound to the ribosome.

In terms of biological role, one of the early assembly proteins it binds 23S rRNA. One of the proteins that surrounds the polypeptide exit tunnel on the outside of the ribosome. Forms the main docking site for trigger factor binding to the ribosome. The protein is Large ribosomal subunit protein uL23 of Shewanella halifaxensis (strain HAW-EB4).